The chain runs to 264 residues: Chymotrypsin-like protease CTRL-1 (264 aa).

The signal sequence occupies residues 1 to 18; it reads MLLLSLTLSLVLLGSSWG. Positions 19–33 are cleaved as a propeptide — activation peptide; that stretch reads CGIPAIKPALSFSQR. Intrachain disulfides connect Cys-19/Cys-141, Cys-60/Cys-76, Cys-155/Cys-220, Cys-187/Cys-201, and Cys-210/Cys-239. In terms of domain architecture, Peptidase S1 spans 34–262; it reads IVNGENAVLG…FSTWINQVIA (229 aa). The Charge relay system role is filled by His-75. Residue Asn-114 is glycosylated (N-linked (GlcNAc...) asparagine). The Charge relay system role is filled by Asp-121. The active-site Charge relay system is the Ser-214.

Belongs to the peptidase S1 family.

The sequence is that of Chymotrypsin-like protease CTRL-1 (CTRL) from Homo sapiens (Human).